A 275-amino-acid chain; its full sequence is Large ribosomal subunit protein uL2 (275 aa).

Residues 36–49 (TQSSTAGRNNNGRI) are compositionally biased toward polar residues. Disordered regions lie at residues 36-59 (TQSS…GGHK) and 224-275 (AMNP…RHKR). Residues 50–59 (TTRHKGGGHK) show a composition bias toward basic residues.

It belongs to the universal ribosomal protein uL2 family. Part of the 50S ribosomal subunit. Forms a bridge to the 30S subunit in the 70S ribosome.

One of the primary rRNA binding proteins. Required for association of the 30S and 50S subunits to form the 70S ribosome, for tRNA binding and peptide bond formation. It has been suggested to have peptidyltransferase activity; this is somewhat controversial. Makes several contacts with the 16S rRNA in the 70S ribosome. This chain is Large ribosomal subunit protein uL2, found in Burkholderia vietnamiensis (strain G4 / LMG 22486) (Burkholderia cepacia (strain R1808)).